A 72-amino-acid chain; its full sequence is Alpha-elapitoxin-Ast2b (72 aa).

5 disulfides stabilise this stretch: C3–C20, C13–C41, C26–C30, C45–C56, and C57–C62. R72 carries the post-translational modification Arginine amide.

This sequence belongs to the three-finger toxin family. Long-chain subfamily. Type II alpha-neurotoxin sub-subfamily. Expressed by the venom gland.

Its subcellular location is the secreted. Its function is as follows. Binds with high affinity to muscular (alpha-1/CHRNA1) and neuronal (alpha-7/CHRNA7) nicotinic acetylcholine receptor (nAChR) and inhibits acetylcholine from binding to the receptor, thereby impairing neuromuscular and neuronal transmission. The sequence is that of Alpha-elapitoxin-Ast2b from Hydrophis stokesii (Stokes's sea snake).